Consider the following 342-residue polypeptide: Fructose-1,6-bisphosphatase class 1 (342 aa).

Positions 97, 119, 121, and 122 each coordinate Mg(2+). Residues 122 to 125 (DGSS), N215, Y247, and K280 contribute to the substrate site. Mg(2+) is bound at residue E286.

The protein belongs to the FBPase class 1 family. As to quaternary structure, homotetramer. It depends on Mg(2+) as a cofactor.

It is found in the cytoplasm. It catalyses the reaction beta-D-fructose 1,6-bisphosphate + H2O = beta-D-fructose 6-phosphate + phosphate. Its pathway is carbohydrate biosynthesis; gluconeogenesis. This chain is Fructose-1,6-bisphosphatase class 1, found in Leptospira interrogans serogroup Icterohaemorrhagiae serovar copenhageni (strain Fiocruz L1-130).